We begin with the raw amino-acid sequence, 507 residues long: ATP synthase subunit alpha, mitochondrial (507 aa).

171–178 contributes to the ATP binding site; that stretch reads GDRQTGKT.

The protein belongs to the ATPase alpha/beta chains family. In terms of assembly, F-type ATPases have 2 components, CF(1) - the catalytic core - and CF(0) - the membrane proton channel. CF(1) has five subunits: alpha(3), beta(3), gamma(1), delta(1), epsilon(1). CF(0) has three main subunits: a, b and c.

It localises to the mitochondrion. The protein resides in the mitochondrion inner membrane. In terms of biological role, mitochondrial membrane ATP synthase (F(1)F(0) ATP synthase or Complex V) produces ATP from ADP in the presence of a proton gradient across the membrane which is generated by electron transport complexes of the respiratory chain. F-type ATPases consist of two structural domains, F(1) - containing the extramembraneous catalytic core, and F(0) - containing the membrane proton channel, linked together by a central stalk and a peripheral stalk. During catalysis, ATP synthesis in the catalytic domain of F(1) is coupled via a rotary mechanism of the central stalk subunits to proton translocation. Subunits alpha and beta form the catalytic core in F(1). Rotation of the central stalk against the surrounding alpha(3)beta(3) subunits leads to hydrolysis of ATP in three separate catalytic sites on the beta subunits. Subunit alpha does not bear the catalytic high-affinity ATP-binding sites. The protein is ATP synthase subunit alpha, mitochondrial (ATPA) of Pisum sativum (Garden pea).